The following is a 94-amino-acid chain: Small ribosomal subunit protein uS17 (94 aa).

Belongs to the universal ribosomal protein uS17 family. As to quaternary structure, part of the 30S ribosomal subunit.

In terms of biological role, one of the primary rRNA binding proteins, it binds specifically to the 5'-end of 16S ribosomal RNA. The polypeptide is Small ribosomal subunit protein uS17 (Symbiobacterium thermophilum (strain DSM 24528 / JCM 14929 / IAM 14863 / T)).